The primary structure comprises 124 residues: Apolipoprotein C-IV (124 aa).

A signal peptide spans 1–27 (MLLPRRGLRTLPSLCLYILVLVWVVAC).

It belongs to the apolipoprotein C4 family. Post-translationally, glycosylated; contains sialic acid. Present in up to five sialylated isoforms. Blood plasma, associated primarily with VLDL and HDL. Expressed mainly in the liver.

The protein resides in the secreted. Functionally, may participate in lipoprotein metabolism. The polypeptide is Apolipoprotein C-IV (APOC4) (Oryctolagus cuniculus (Rabbit)).